The chain runs to 731 residues: E3 ubiquitin-protein ligase COP1 (731 aa).

The tract at residues 1–40 (MSGSRQAGSGSAGTSPGSSAASSVTSASSSLSSSPSPPSV) is disordered. A Nuclear localization signal 1 motif is present at residues 109–113 (GSRKR). The segment at 136 to 174 (CPICFDMIEEAYMTKCGHSFCYKCIHQSLEDNNRCPKCN) adopts an RING-type zinc-finger fold. Positions 195–206 (KQKQRFEEKRFK) match the Nuclear localization signal 2 motif. A coiled-coil region spans residues 233 to 301 (LDLANVNLML…DIKRVEEMSG (69 aa)). A Nuclear export signal motif is present at residues 235 to 245 (LANVNLMLELL). The interval 305 to 325 (PVSEDSTVPQFEAPSPSHSSI) is disordered. 7 WD repeats span residues 419–458 (NGSS…QDAV), 468–508 (TCNS…RSKV), 511–551 (EHEK…SVAS), 553–593 (EAKA…QPIM), 597–635 (GHRK…CLRS), 638–677 (GHIN…TLLT), and 691–729 (RKED…KVLE). The interval 643–645 (KNF) is interaction with TRIB1.

The protein belongs to the COP1 family. As to quaternary structure, homodimer. Homodimerization is mediated by the coiled coil domain. Component of the DCX DET1-COP1 ubiquitin ligase complex at least composed of RBX1, DET1, DDB1, CUL4A and COP1. Isoform 2 does not interact with CUL4A but still binds to RBX1, suggesting that the interaction may be mediated by another cullin protein. Isoform 1 and isoform 2 interact with CUL5 but not with CUL1, CUL2 not CUL3. Interacts with bZIP transcription factors JUN, JUNB and JUND but not with FOS, ATF2 nor XBP1. Interacts with p53 (TP53). Interacts with COPS6; this interaction stabilizes RFWD2 through reducing its auto-ubiquitination and decelerating its turnover rate. Interacts with SFN; this interaction leads to SFN degradation. Isoform 4 forms heterodimers with isoform 1, preventing its association with DET1. Interacts with p53/TP53 and MTA1. Interacts with TRIB1 (via C-terminus) and TRIB2. Autoubiquitinated. MTA1 destabilizes it by promoting its autoubiquitination. As to expression, ubiquitously expressed at low level. Expressed at higher level in testis, placenta, skeletal muscle and heart.

The protein localises to the nucleus speckle. It localises to the cytoplasm. It carries out the reaction S-ubiquitinyl-[E2 ubiquitin-conjugating enzyme]-L-cysteine + [acceptor protein]-L-lysine = [E2 ubiquitin-conjugating enzyme]-L-cysteine + N(6)-ubiquitinyl-[acceptor protein]-L-lysine.. The protein operates within protein modification; protein ubiquitination. Its activity is regulated as follows. TRIB1 competes with substrates for RFWD2 binding. Its function is as follows. E3 ubiquitin-protein ligase that mediates ubiquitination and subsequent proteasomal degradation of target proteins. E3 ubiquitin ligases accept ubiquitin from an E2 ubiquitin-conjugating enzyme in the form of a thioester and then directly transfers the ubiquitin to targeted substrates. Involved in JUN ubiquitination and degradation. Directly involved in p53 (TP53) ubiquitination and degradation, thereby abolishing p53-dependent transcription and apoptosis. Ubiquitinates p53 independently of MDM2 or RCHY1. Probably mediates E3 ubiquitin ligase activity by functioning as the essential RING domain subunit of larger E3 complexes. In contrast, it does not constitute the catalytic RING subunit in the DCX DET1-COP1 complex that negatively regulates JUN, the ubiquitin ligase activity being mediated by RBX1. Involved in 14-3-3 protein sigma/SFN ubiquitination and proteasomal degradation, leading to AKT activation and promotion of cell survival. Ubiquitinates MTA1 leading to its proteasomal degradation. Upon binding to TRIB1, ubiquitinates CEBPA, which lacks a canonical COP1-binding motif. The chain is E3 ubiquitin-protein ligase COP1 from Homo sapiens (Human).